Reading from the N-terminus, the 177-residue chain is Probable inosine/xanthosine triphosphatase (177 aa).

This sequence belongs to the YjjX NTPase family. As to quaternary structure, homodimer. Requires Mg(2+) as cofactor. Mn(2+) serves as cofactor.

The catalysed reaction is XTP + H2O = XDP + phosphate + H(+). It catalyses the reaction ITP + H2O = IDP + phosphate + H(+). Phosphatase that hydrolyzes non-canonical purine nucleotides such as XTP and ITP to their respective diphosphate derivatives. Probably excludes non-canonical purines from DNA/RNA precursor pool, thus preventing their incorporation into DNA/RNA and avoiding chromosomal lesions. This is Probable inosine/xanthosine triphosphatase from Halalkalibacterium halodurans (strain ATCC BAA-125 / DSM 18197 / FERM 7344 / JCM 9153 / C-125) (Bacillus halodurans).